The primary structure comprises 294 residues: Pyridoxal 5'-phosphate synthase subunit PdxS (294 aa).

Residue D24 coordinates D-ribose 5-phosphate. K81 (schiff-base intermediate with D-ribose 5-phosphate) is an active-site residue. G153 contributes to the D-ribose 5-phosphate binding site. A D-glyceraldehyde 3-phosphate-binding site is contributed by R165. D-ribose 5-phosphate contacts are provided by residues G214 and 235–236 (GS).

Belongs to the PdxS/SNZ family. In the presence of PdxT, forms a dodecamer of heterodimers.

The enzyme catalyses aldehydo-D-ribose 5-phosphate + D-glyceraldehyde 3-phosphate + L-glutamine = pyridoxal 5'-phosphate + L-glutamate + phosphate + 3 H2O + H(+). Its pathway is cofactor biosynthesis; pyridoxal 5'-phosphate biosynthesis. Its function is as follows. Catalyzes the formation of pyridoxal 5'-phosphate from ribose 5-phosphate (RBP), glyceraldehyde 3-phosphate (G3P) and ammonia. The ammonia is provided by the PdxT subunit. Can also use ribulose 5-phosphate and dihydroxyacetone phosphate as substrates, resulting from enzyme-catalyzed isomerization of RBP and G3P, respectively. In Anoxybacillus flavithermus (strain DSM 21510 / WK1), this protein is Pyridoxal 5'-phosphate synthase subunit PdxS.